The chain runs to 526 residues: DDB1- and CUL4-associated factor 17 (526 aa).

The next 2 membrane-spanning stretches (helical) occupy residues 200–220 and 237–257; these read ILMR…MLEI and GVLA…EYIV.

Its subcellular location is the membrane. It localises to the nucleus. It is found in the nucleolus. Its pathway is protein modification; protein ubiquitination. Functionally, may function as a substrate receptor for CUL4-DDB1 E3 ubiquitin-protein ligase complex. This Danio rerio (Zebrafish) protein is DDB1- and CUL4-associated factor 17 (dcaf17).